A 270-amino-acid polypeptide reads, in one-letter code: ParA family protein MPN_688 (270 aa).

This sequence belongs to the ParA family.

The sequence is that of ParA family protein MPN_688 from Mycoplasma pneumoniae (strain ATCC 29342 / M129 / Subtype 1) (Mycoplasmoides pneumoniae).